A 303-amino-acid chain; its full sequence is N-acetyl-D-glucosamine kinase (303 aa).

Residues G4 to K11 and G133 to V140 each bind ATP. H157, C177, C179, and C184 together coordinate Zn(2+).

Belongs to the ROK (NagC/XylR) family. NagK subfamily.

It catalyses the reaction N-acetyl-D-glucosamine + ATP = N-acetyl-D-glucosamine 6-phosphate + ADP + H(+). Its pathway is cell wall biogenesis; peptidoglycan recycling. In terms of biological role, catalyzes the phosphorylation of N-acetyl-D-glucosamine (GlcNAc) derived from cell-wall degradation, yielding GlcNAc-6-P. The polypeptide is N-acetyl-D-glucosamine kinase (Erwinia tasmaniensis (strain DSM 17950 / CFBP 7177 / CIP 109463 / NCPPB 4357 / Et1/99)).